A 161-amino-acid chain; its full sequence is 2-C-methyl-D-erythritol 2,4-cyclodiphosphate synthase (161 aa).

The a divalent metal cation site is built by Asp10 and His12. 4-CDP-2-C-methyl-D-erythritol 2-phosphate is bound by residues 10–12 (DVH) and 36–37 (HS). An a divalent metal cation-binding site is contributed by His44. 4-CDP-2-C-methyl-D-erythritol 2-phosphate contacts are provided by residues 58–60 (DIG), 63–67 (FPDTD), 102–108 (AQAPKML), 134–137 (TTTE), Phe141, and Arg144.

The protein belongs to the IspF family. Homotrimer. A divalent metal cation serves as cofactor.

It catalyses the reaction 4-CDP-2-C-methyl-D-erythritol 2-phosphate = 2-C-methyl-D-erythritol 2,4-cyclic diphosphate + CMP. Its pathway is isoprenoid biosynthesis; isopentenyl diphosphate biosynthesis via DXP pathway; isopentenyl diphosphate from 1-deoxy-D-xylulose 5-phosphate: step 4/6. Its function is as follows. Involved in the biosynthesis of isopentenyl diphosphate (IPP) and dimethylallyl diphosphate (DMAPP), two major building blocks of isoprenoid compounds. Catalyzes the conversion of 4-diphosphocytidyl-2-C-methyl-D-erythritol 2-phosphate (CDP-ME2P) to 2-C-methyl-D-erythritol 2,4-cyclodiphosphate (ME-CPP) with a corresponding release of cytidine 5-monophosphate (CMP). In Shewanella loihica (strain ATCC BAA-1088 / PV-4), this protein is 2-C-methyl-D-erythritol 2,4-cyclodiphosphate synthase.